The chain runs to 686 residues: MNDTWRSRLKEISHITADPFLRDFHKLHTNDKEQIYSILHNPDNVVEQTFKNTIIKSMEESMFRPLIPTQQMKRRQNDHHNQGPPPKVQKSTVDSLKSQHQIDQQNLDWFLSQPLEDLEVMTVPEQYPLTVPAVLPLAELYYLTQTLASIKLLPGSHKVLMTENFESALAEGKIAVLYSRIEELKRQGKWSLRQPQKFYDPFKFIRKSKKKSFHWDYLLQEGKWMADDFRESSKYKKWCCVVIAEAVEQYWKGRKVSHQTFVDVADLKKIDKSIIRNLPVYTGLGGDSREPPIATVSKLVYPAEDNHWYKIALKPHHHHHRHQTTHQGLFGSTRKYNTLKPPKPPTPKNIEYRIPTIWLPEDDKRLIHYVAEFCFNWDLISEHISSSSTAVSLKKYESNIERRTPWQCFERYIQLNDKFQFSDMKGVYAYHAQQWLEQAHRAQSTTKRRISPLGVGPESVQRGNRKLRWASMFDAMRKAMKKREIAAAKVNHRKSTAELQANQNVTEPKPNSDRIPTPAELSRLKFERDKTLHENHINQQATRARMVQAVAKPAPAPAPAPPPPPPPKPVKRPTTPNGTPLTNEQIQHLLQMQKHRRMLQQQQQQQQQQQHQQQQRRIHFPPAQVSKVINDIQQQNPGLSKDQVTKLAAQYLASLSQQGYGVPSSPVPPHQKNQTASPMSGSPNNA.

Positions 71 to 97 (QMKRRQNDHHNQGPPPKVQKSTVDSLK) are disordered. Residues 202–280 (FKFIRKSKKK…DKSIIRNLPV (79 aa)) form the HSA domain. The Myb-like domain maps to 354–418 (IPTIWLPEDD…FERYIQLNDK (65 aa)). Disordered regions lie at residues 493 to 517 (RKSTAELQANQNVTEPKPNSDRIPT), 544 to 617 (ARMV…QQRR), and 657 to 686 (QQGYGVPSSPVPPHQKNQTASPMSGSPNNA). Polar residues predominate over residues 497–506 (AELQANQNVT). The span at 554–568 (APAPAPAPPPPPPPK) shows a compositional bias: pro residues. A compositionally biased stretch (polar residues) spans 574-588 (TTPNGTPLTNEQIQH). The span at 599 to 613 (LQQQQQQQQQQQHQQ) shows a compositional bias: low complexity. Polar residues predominate over residues 671-686 (QKNQTASPMSGSPNNA).

It belongs to the EAF1 family. As to quaternary structure, component of the NuA4 histone acetyltransferase complex.

It localises to the nucleus. Functionally, component of the NuA4 histone acetyltransferase complex which is involved in transcriptional activation of selected genes principally by acetylation of nucleosomal histone H4 and H2A. The NuA4 complex is also involved in DNA repair. This Candida albicans (strain SC5314 / ATCC MYA-2876) (Yeast) protein is Chromatin modification-related protein EAF1 (VID21).